The following is a 68-amino-acid chain: DNA-directed RNA polymerase subunit omega (68 aa).

This sequence belongs to the RNA polymerase subunit omega family. In terms of assembly, the RNAP catalytic core consists of 2 alpha, 1 beta, 1 beta' and 1 omega subunit. When a sigma factor is associated with the core the holoenzyme is formed, which can initiate transcription.

The enzyme catalyses RNA(n) + a ribonucleoside 5'-triphosphate = RNA(n+1) + diphosphate. In terms of biological role, promotes RNA polymerase assembly. Latches the N- and C-terminal regions of the beta' subunit thereby facilitating its interaction with the beta and alpha subunits. The protein is DNA-directed RNA polymerase subunit omega of Nitrosospira multiformis (strain ATCC 25196 / NCIMB 11849 / C 71).